The chain runs to 388 residues: G2/mitotic-specific cyclin-B2 (388 aa).

The interval 46–67 (ATNGKVGPSKKPSKASCVQKPK) is disordered.

Belongs to the cyclin family. Cyclin AB subfamily. As to quaternary structure, interacts with the CDK1 protein kinase to form a serine/threonine kinase holoenzyme complex also known as maturation promoting factor (MPF). The cyclin subunit imparts substrate specificity to the complex.

Functionally, essential for the control of the cell cycle at the G2/M (mitosis) transition. The polypeptide is G2/mitotic-specific cyclin-B2 (ccnb2) (Oryzias curvinotus (Hynann ricefish)).